The chain runs to 229 residues: Nectarin-1 (229 aa).

The N-terminal stretch at 1–32 is a signal peptide; it reads MAAFGIKSKIFQIMEMTILFLFAISIDRYCFA. A disulfide bridge connects residues C42 and C57. An N-linked (GlcNAc...) asparagine glycan is attached at N60. The Cupin type-1 domain occupies 69-217; it reads FAISKPGATN…TFQINIEDVQ (149 aa). Mn(2+) contacts are provided by H117, H119, E124, and H163.

It belongs to the germin family. Monomer. In the absence of manganese, it forms tetrameric and pentameric forms which show superoxide dismutase activity. Mn(2+) is required as a cofactor. In terms of processing, glycosylated.

The protein resides in the secreted. Its subcellular location is the extracellular space. It is found in the apoplast. It carries out the reaction 2 superoxide + 2 H(+) = H2O2 + O2. Its function is as follows. May interact with bacterial adhesins thereby protecting the reproductive tissues from microbial attack. Has no oxalate oxidase activity. This chain is Nectarin-1 (NEC1), found in Nicotiana plumbaginifolia (Leadwort-leaved tobacco).